A 28-amino-acid chain; its full sequence is Chaperonin GroEL (28 aa).

It belongs to the chaperonin (HSP60) family. Forms a cylinder of 14 subunits composed of two heptameric rings stacked back-to-back. Interacts with the co-chaperonin GroES.

The protein resides in the cytoplasm. It catalyses the reaction ATP + H2O + a folded polypeptide = ADP + phosphate + an unfolded polypeptide.. Its function is as follows. Together with its co-chaperonin GroES, plays an essential role in assisting protein folding. The GroEL-GroES system forms a nano-cage that allows encapsulation of the non-native substrate proteins and provides a physical environment optimized to promote and accelerate protein folding. The chain is Chaperonin GroEL from Mycolicibacterium smegmatis (Mycobacterium smegmatis).